The primary structure comprises 20 residues: LSLHEYMSMELLQEAGVSIP.

Positions 8–20 (SMELLQEAGVSIP) constitute an ATP-grasp domain.

This sequence belongs to the succinate/malate CoA ligase beta subunit family. ATP-specific subunit beta subfamily. As to quaternary structure, heterodimer of an alpha and a beta subunit. The beta subunit determines specificity for ATP. Interacts with ALAS2.

It localises to the mitochondrion. It carries out the reaction succinate + ATP + CoA = succinyl-CoA + ADP + phosphate. The protein operates within carbohydrate metabolism; tricarboxylic acid cycle; succinate from succinyl-CoA (ligase route): step 1/1. ATP-specific succinyl-CoA synthetase functions in the citric acid cycle (TCA), coupling the hydrolysis of succinyl-CoA to the synthesis of ATP and thus represents the only step of substrate-level phosphorylation in the TCA. The beta subunit provides nucleotide specificity of the enzyme and binds the substrate succinate, while the binding sites for coenzyme A and phosphate are found in the alpha subunit. The protein is Succinate--CoA ligase [ADP-forming] subunit beta, mitochondrial of Canis lupus familiaris (Dog).